A 339-amino-acid polypeptide reads, in one-letter code: Glycerol-3-phosphate dehydrogenase [NAD(P)+] (339 aa).

NADPH contacts are provided by serine 15, tyrosine 16, histidine 36, and lysine 110. Sn-glycerol 3-phosphate contacts are provided by lysine 110, glycine 139, and threonine 141. Alanine 143 lines the NADPH pocket. The sn-glycerol 3-phosphate site is built by lysine 195, aspartate 248, serine 258, arginine 259, and asparagine 260. Lysine 195 acts as the Proton acceptor in catalysis. Arginine 259 is an NADPH binding site. Positions 283 and 285 each coordinate NADPH.

Belongs to the NAD-dependent glycerol-3-phosphate dehydrogenase family.

The protein resides in the cytoplasm. The catalysed reaction is sn-glycerol 3-phosphate + NAD(+) = dihydroxyacetone phosphate + NADH + H(+). It carries out the reaction sn-glycerol 3-phosphate + NADP(+) = dihydroxyacetone phosphate + NADPH + H(+). It functions in the pathway membrane lipid metabolism; glycerophospholipid metabolism. Its function is as follows. Catalyzes the reduction of the glycolytic intermediate dihydroxyacetone phosphate (DHAP) to sn-glycerol 3-phosphate (G3P), the key precursor for phospholipid synthesis. This is Glycerol-3-phosphate dehydrogenase [NAD(P)+] from Citrobacter koseri (strain ATCC BAA-895 / CDC 4225-83 / SGSC4696).